Reading from the N-terminus, the 608-residue chain is DNA mismatch repair protein MutL (608 aa).

The protein belongs to the DNA mismatch repair MutL/HexB family.

Functionally, this protein is involved in the repair of mismatches in DNA. It is required for dam-dependent methyl-directed DNA mismatch repair. May act as a 'molecular matchmaker', a protein that promotes the formation of a stable complex between two or more DNA-binding proteins in an ATP-dependent manner without itself being part of a final effector complex. This is DNA mismatch repair protein MutL from Elusimicrobium minutum (strain Pei191).